We begin with the raw amino-acid sequence, 240 residues long: Methylthioribulose-1-phosphate dehydratase (240 aa).

The span at 1–10 (MAQEIEKTNN) shows a compositional bias: basic and acidic residues. Residues 1–20 (MAQEIEKTNNDHLVQSSDPE) form a disordered region. Cys-100 serves as a coordination point for substrate. Zn(2+) is bound by residues His-117 and His-119. Glu-146 functions as the Proton donor/acceptor in the catalytic mechanism. His-202 provides a ligand contact to Zn(2+).

It belongs to the aldolase class II family. MtnB subfamily. The cofactor is Zn(2+).

It localises to the cytoplasm. The enzyme catalyses 5-(methylsulfanyl)-D-ribulose 1-phosphate = 5-methylsulfanyl-2,3-dioxopentyl phosphate + H2O. It functions in the pathway amino-acid biosynthesis; L-methionine biosynthesis via salvage pathway; L-methionine from S-methyl-5-thio-alpha-D-ribose 1-phosphate: step 2/6. Catalyzes the dehydration of methylthioribulose-1-phosphate (MTRu-1-P) into 2,3-diketo-5-methylthiopentyl-1-phosphate (DK-MTP-1-P). The sequence is that of Methylthioribulose-1-phosphate dehydratase from Aspergillus fumigatus (strain CBS 144.89 / FGSC A1163 / CEA10) (Neosartorya fumigata).